A 306-amino-acid chain; its full sequence is Ribosomal protein L11 methyltransferase (306 aa).

S-adenosyl-L-methionine-binding residues include T154, G179, D201, and N242.

Belongs to the methyltransferase superfamily. PrmA family.

It localises to the cytoplasm. The enzyme catalyses L-lysyl-[protein] + 3 S-adenosyl-L-methionine = N(6),N(6),N(6)-trimethyl-L-lysyl-[protein] + 3 S-adenosyl-L-homocysteine + 3 H(+). Methylates ribosomal protein L11. The polypeptide is Ribosomal protein L11 methyltransferase (Stenotrophomonas maltophilia (strain R551-3)).